A 286-amino-acid chain; its full sequence is Phosphatidylserine decarboxylase proenzyme (286 aa).

Catalysis depends on charge relay system; for autoendoproteolytic cleavage activity residues Asp91, His148, and Ser251. Catalysis depends on Ser251, which acts as the Schiff-base intermediate with substrate; via pyruvic acid; for decarboxylase activity. Residue Ser251 is modified to Pyruvic acid (Ser); by autocatalysis.

This sequence belongs to the phosphatidylserine decarboxylase family. PSD-B subfamily. Prokaryotic type I sub-subfamily. As to quaternary structure, heterodimer of a large membrane-associated beta subunit and a small pyruvoyl-containing alpha subunit. Pyruvate is required as a cofactor. In terms of processing, is synthesized initially as an inactive proenzyme. Formation of the active enzyme involves a self-maturation process in which the active site pyruvoyl group is generated from an internal serine residue via an autocatalytic post-translational modification. Two non-identical subunits are generated from the proenzyme in this reaction, and the pyruvate is formed at the N-terminus of the alpha chain, which is derived from the carboxyl end of the proenzyme. The autoendoproteolytic cleavage occurs by a canonical serine protease mechanism, in which the side chain hydroxyl group of the serine supplies its oxygen atom to form the C-terminus of the beta chain, while the remainder of the serine residue undergoes an oxidative deamination to produce ammonia and the pyruvoyl prosthetic group on the alpha chain. During this reaction, the Ser that is part of the protease active site of the proenzyme becomes the pyruvoyl prosthetic group, which constitutes an essential element of the active site of the mature decarboxylase.

It localises to the cell membrane. The catalysed reaction is a 1,2-diacyl-sn-glycero-3-phospho-L-serine + H(+) = a 1,2-diacyl-sn-glycero-3-phosphoethanolamine + CO2. It functions in the pathway phospholipid metabolism; phosphatidylethanolamine biosynthesis; phosphatidylethanolamine from CDP-diacylglycerol: step 2/2. Its function is as follows. Catalyzes the formation of phosphatidylethanolamine (PtdEtn) from phosphatidylserine (PtdSer). The polypeptide is Phosphatidylserine decarboxylase proenzyme (Marinobacter nauticus (strain ATCC 700491 / DSM 11845 / VT8) (Marinobacter aquaeolei)).